The chain runs to 362 residues: Phosphoserine aminotransferase (362 aa).

Positions 9 and 42 each coordinate L-glutamate. Pyridoxal 5'-phosphate-binding positions include 76–77, Trp-102, Thr-153, Asp-174, and Gln-197; that span reads GR. Lys-198 carries the N6-(pyridoxal phosphate)lysine modification. 239–240 serves as a coordination point for pyridoxal 5'-phosphate; it reads NT.

The protein belongs to the class-V pyridoxal-phosphate-dependent aminotransferase family. SerC subfamily. In terms of assembly, homodimer. It depends on pyridoxal 5'-phosphate as a cofactor.

The protein resides in the cytoplasm. The catalysed reaction is O-phospho-L-serine + 2-oxoglutarate = 3-phosphooxypyruvate + L-glutamate. It catalyses the reaction 4-(phosphooxy)-L-threonine + 2-oxoglutarate = (R)-3-hydroxy-2-oxo-4-phosphooxybutanoate + L-glutamate. The protein operates within amino-acid biosynthesis; L-serine biosynthesis; L-serine from 3-phospho-D-glycerate: step 2/3. It functions in the pathway cofactor biosynthesis; pyridoxine 5'-phosphate biosynthesis; pyridoxine 5'-phosphate from D-erythrose 4-phosphate: step 3/5. Catalyzes the reversible conversion of 3-phosphohydroxypyruvate to phosphoserine and of 3-hydroxy-2-oxo-4-phosphonooxybutanoate to phosphohydroxythreonine. The protein is Phosphoserine aminotransferase of Escherichia coli O139:H28 (strain E24377A / ETEC).